Consider the following 364-residue polypeptide: tRNA 2-selenouridine synthase (364 aa).

The Rhodanese domain maps to 14-137 (LIADTPIIDV…LRQTAIQATI (124 aa)). Catalysis depends on Cys-97, which acts as the S-selanylcysteine intermediate.

Belongs to the SelU family. As to quaternary structure, monomer.

The catalysed reaction is 5-methylaminomethyl-2-thiouridine(34) in tRNA + selenophosphate + (2E)-geranyl diphosphate + H2O + H(+) = 5-methylaminomethyl-2-selenouridine(34) in tRNA + (2E)-thiogeraniol + phosphate + diphosphate. It catalyses the reaction 5-methylaminomethyl-2-thiouridine(34) in tRNA + (2E)-geranyl diphosphate = 5-methylaminomethyl-S-(2E)-geranyl-thiouridine(34) in tRNA + diphosphate. The enzyme catalyses 5-methylaminomethyl-S-(2E)-geranyl-thiouridine(34) in tRNA + selenophosphate + H(+) = 5-methylaminomethyl-2-(Se-phospho)selenouridine(34) in tRNA + (2E)-thiogeraniol. It carries out the reaction 5-methylaminomethyl-2-(Se-phospho)selenouridine(34) in tRNA + H2O = 5-methylaminomethyl-2-selenouridine(34) in tRNA + phosphate. In terms of biological role, involved in the post-transcriptional modification of the uridine at the wobble position (U34) of tRNA(Lys), tRNA(Glu) and tRNA(Gln). Catalyzes the conversion of 2-thiouridine (S2U-RNA) to 2-selenouridine (Se2U-RNA). Acts in a two-step process involving geranylation of 2-thiouridine (S2U) to S-geranyl-2-thiouridine (geS2U) and subsequent selenation of the latter derivative to 2-selenouridine (Se2U) in the tRNA chain. This chain is tRNA 2-selenouridine synthase, found in Escherichia coli (strain K12 / MC4100 / BW2952).